Consider the following 234-residue polypeptide: MPALPWLDENLWFPHPDSALKDPNGLLCVGGDLHPARLRLAYENGIFPWFSEDQPILWWSPDPRCIIRHEDLHISRSMRRFLRNSGLTYSFDQHFTLVVQACAAPRSYSNETWITRDMLQAYSDLHQIGVAHSIEVWRESELVGGLYGLAIGRCFFGESMFSKETNASKAAFITLVRQLHAWGYRLIDCQVPNPHLLSLGACQISRKEFLSILEIEVRADFSHPWKMTIDPTGY.

The protein belongs to the L/F-transferase family.

The protein resides in the cytoplasm. It carries out the reaction N-terminal L-lysyl-[protein] + L-leucyl-tRNA(Leu) = N-terminal L-leucyl-L-lysyl-[protein] + tRNA(Leu) + H(+). It catalyses the reaction N-terminal L-arginyl-[protein] + L-leucyl-tRNA(Leu) = N-terminal L-leucyl-L-arginyl-[protein] + tRNA(Leu) + H(+). The catalysed reaction is L-phenylalanyl-tRNA(Phe) + an N-terminal L-alpha-aminoacyl-[protein] = an N-terminal L-phenylalanyl-L-alpha-aminoacyl-[protein] + tRNA(Phe). Functionally, functions in the N-end rule pathway of protein degradation where it conjugates Leu, Phe and, less efficiently, Met from aminoacyl-tRNAs to the N-termini of proteins containing an N-terminal arginine or lysine. The chain is Leucyl/phenylalanyl-tRNA--protein transferase from Hahella chejuensis (strain KCTC 2396).